Reading from the N-terminus, the 204-residue chain is LexA repressor (204 aa).

The H-T-H motif DNA-binding region spans 31–51 (VREIGQAVGLKSSSTVHTHLV). Catalysis depends on for autocatalytic cleavage activity residues S128 and K165.

It belongs to the peptidase S24 family. As to quaternary structure, homodimer.

The catalysed reaction is Hydrolysis of Ala-|-Gly bond in repressor LexA.. Functionally, represses a number of genes involved in the response to DNA damage (SOS response), including recA and lexA. In the presence of single-stranded DNA, RecA interacts with LexA causing an autocatalytic cleavage which disrupts the DNA-binding part of LexA, leading to derepression of the SOS regulon and eventually DNA repair. This is LexA repressor from Syntrophomonas wolfei subsp. wolfei (strain DSM 2245B / Goettingen).